The following is a 217-amino-acid chain: LexA repressor (217 aa).

Positions 28–48 (RAEIAAEFGFSSPNAAEEHLR) form a DNA-binding region, H-T-H motif. Catalysis depends on for autocatalytic cleavage activity residues S136 and K173.

It belongs to the peptidase S24 family. Homodimer.

The catalysed reaction is Hydrolysis of Ala-|-Gly bond in repressor LexA.. Its function is as follows. Represses a number of genes involved in the response to DNA damage (SOS response), including recA and lexA. In the presence of single-stranded DNA, RecA interacts with LexA causing an autocatalytic cleavage which disrupts the DNA-binding part of LexA, leading to derepression of the SOS regulon and eventually DNA repair. In Cupriavidus taiwanensis (strain DSM 17343 / BCRC 17206 / CCUG 44338 / CIP 107171 / LMG 19424 / R1) (Ralstonia taiwanensis (strain LMG 19424)), this protein is LexA repressor.